A 335-amino-acid polypeptide reads, in one-letter code: Galactosylgalactosylxylosylprotein 3-beta-glucuronosyltransferase 1 (335 aa).

The Cytoplasmic segment spans residues 1 to 6 (MPKRRD). Residues 3 to 5 (KRR) are essential for transport from endoplasmic reticulum to Golgi apparatus and interaction with SAR1A. The chain crosses the membrane as a helical; Signal-anchor for type II membrane protein span at residues 7–27 (ILAIVLIVLPWTLLVTVWHQS). Residues 28-335 (TIAPLLTTHK…KGFTDPTVEI (308 aa)) lie on the Lumenal side of the membrane. Residue 92-94 (PTY) coordinates UDP-alpha-D-glucuronate. T104 and T109 each carry phosphothreonine. D123 serves as a coordination point for UDP-alpha-D-glucuronate. Residue N141 is glycosylated (N-linked (GlcNAc...) asparagine). Residues R166 and R171 each coordinate UDP-alpha-D-glucuronate. An N-linked (GlcNAc...) asparagine glycan is attached at N185. 196–198 (DDD) is a UDP-alpha-D-glucuronate binding site. D198 provides a ligand contact to Mn(2+). The segment at 246–255 (FDPHRPFAID) is interaction with galactose moiety of substrate glycoprotein. E285 acts as the Proton donor/acceptor in catalysis. N-linked (GlcNAc...) asparagine glycosylation occurs at N304. Residue 312 to 314 (HTR) participates in UDP-alpha-D-glucuronate binding.

Belongs to the glycosyltransferase 43 family. As to quaternary structure, homodimer. Interacts with SAR1A. Mn(2+) is required as a cofactor. Post-translationally, the soluble form derives from the membrane form by proteolytic processing.

It localises to the golgi apparatus membrane. The protein resides in the secreted. The enzyme catalyses 3-O-(beta-D-galactosyl-(1-&gt;3)-beta-D-galactosyl-(1-&gt;4)-beta-D-xylosyl)-L-seryl-[protein] + UDP-alpha-D-glucuronate = 3-O-(beta-D-GlcA-(1-&gt;3)-beta-D-Gal-(1-&gt;3)-beta-D-Gal-(1-&gt;4)-beta-D-Xyl)-L-seryl-[protein] + UDP + H(+). Its pathway is protein modification; protein glycosylation. In terms of biological role, involved in the biosynthesis of L2/HNK-1 carbohydrate epitope on glycoproteins. Can also play a role in glycosaminoglycan biosynthesis. Substrates include asialo-orosomucoid (ASOR), asialo-fetuin, and asialo-neural cell adhesion molecule. Requires sphingomyelin for activity: stearoyl-sphingomyelin was the most effective, followed by palmitoyl-sphingomyelin and lignoceroyl-sphingomyelin. Activity was demonstrated only for sphingomyelin with a saturated fatty acid and not for that with an unsaturated fatty acid, regardless of the length of the acyl group. The protein is Galactosylgalactosylxylosylprotein 3-beta-glucuronosyltransferase 1 of Canis lupus familiaris (Dog).